The primary structure comprises 311 residues: Eukaryotic translation initiation factor 3 subunit E (311 aa).

In terms of domain architecture, PCI spans 100–280 (VYYNYPKGRD…MGVKSVSIHE (181 aa)).

This sequence belongs to the eIF-3 subunit E family. As to quaternary structure, component of the eukaryotic translation initiation factor 3 (eIF-3) complex.

Its subcellular location is the cytoplasm. Its function is as follows. Component of the eukaryotic translation initiation factor 3 (eIF-3) complex, which is involved in protein synthesis of a specialized repertoire of mRNAs and, together with other initiation factors, stimulates binding of mRNA and methionyl-tRNAi to the 40S ribosome. The eIF-3 complex specifically targets and initiates translation of a subset of mRNAs involved in cell proliferation. The chain is Eukaryotic translation initiation factor 3 subunit E from Caenorhabditis briggsae.